Consider the following 897-residue polypeptide: Leucine--tRNA ligase (897 aa).

The 'HIGH' region motif lies at 49–59 (PYPSGKLHMGH). A 'KMSKS' region motif is present at residues 654–658 (KMSKS). Lysine 657 contacts ATP.

Belongs to the class-I aminoacyl-tRNA synthetase family.

The protein resides in the cytoplasm. The enzyme catalyses tRNA(Leu) + L-leucine + ATP = L-leucyl-tRNA(Leu) + AMP + diphosphate. The protein is Leucine--tRNA ligase of Methylibium petroleiphilum (strain ATCC BAA-1232 / LMG 22953 / PM1).